Consider the following 282-residue polypeptide: Phosphatidylserine decarboxylase proenzyme (282 aa).

Residues aspartate 88, histidine 145, and serine 248 each act as charge relay system; for autoendoproteolytic cleavage activity in the active site. The active-site Schiff-base intermediate with substrate; via pyruvic acid; for decarboxylase activity is serine 248. Position 248 is a pyruvic acid (Ser); by autocatalysis (serine 248).

This sequence belongs to the phosphatidylserine decarboxylase family. PSD-B subfamily. Prokaryotic type I sub-subfamily. In terms of assembly, heterodimer of a large membrane-associated beta subunit and a small pyruvoyl-containing alpha subunit. Requires pyruvate as cofactor. Is synthesized initially as an inactive proenzyme. Formation of the active enzyme involves a self-maturation process in which the active site pyruvoyl group is generated from an internal serine residue via an autocatalytic post-translational modification. Two non-identical subunits are generated from the proenzyme in this reaction, and the pyruvate is formed at the N-terminus of the alpha chain, which is derived from the carboxyl end of the proenzyme. The autoendoproteolytic cleavage occurs by a canonical serine protease mechanism, in which the side chain hydroxyl group of the serine supplies its oxygen atom to form the C-terminus of the beta chain, while the remainder of the serine residue undergoes an oxidative deamination to produce ammonia and the pyruvoyl prosthetic group on the alpha chain. During this reaction, the Ser that is part of the protease active site of the proenzyme becomes the pyruvoyl prosthetic group, which constitutes an essential element of the active site of the mature decarboxylase.

It is found in the cell membrane. It catalyses the reaction a 1,2-diacyl-sn-glycero-3-phospho-L-serine + H(+) = a 1,2-diacyl-sn-glycero-3-phosphoethanolamine + CO2. Its pathway is phospholipid metabolism; phosphatidylethanolamine biosynthesis; phosphatidylethanolamine from CDP-diacylglycerol: step 2/2. Its function is as follows. Catalyzes the formation of phosphatidylethanolamine (PtdEtn) from phosphatidylserine (PtdSer). This chain is Phosphatidylserine decarboxylase proenzyme, found in Dechloromonas aromatica (strain RCB).